Consider the following 394-residue polypeptide: Acetate kinase (394 aa).

Residue Asn-7 coordinates Mg(2+). Position 14 (Lys-14) interacts with ATP. Position 90 (Arg-90) interacts with substrate. Catalysis depends on Asp-147, which acts as the Proton donor/acceptor. Residues 204 to 208 (HLGNG), 278 to 280 (DLR), and 326 to 330 (GIGEN) contribute to the ATP site. Residue Glu-380 coordinates Mg(2+).

The protein belongs to the acetokinase family. As to quaternary structure, homodimer. The cofactor is Mg(2+). Mn(2+) is required as a cofactor.

It localises to the cytoplasm. The catalysed reaction is acetate + ATP = acetyl phosphate + ADP. It participates in metabolic intermediate biosynthesis; acetyl-CoA biosynthesis; acetyl-CoA from acetate: step 1/2. In terms of biological role, catalyzes the formation of acetyl phosphate from acetate and ATP. Can also catalyze the reverse reaction. The chain is Acetate kinase from Flavobacterium johnsoniae (strain ATCC 17061 / DSM 2064 / JCM 8514 / BCRC 14874 / CCUG 350202 / NBRC 14942 / NCIMB 11054 / UW101) (Cytophaga johnsonae).